The primary structure comprises 460 residues: Probable argininosuccinate lyase (460 aa).

2-(N(omega)-L-arginino)succinate-binding residues include S26, N114, and T159. The active-site Proton acceptor is the H160. The Proton donor role is filled by S281. 4 residues coordinate 2-(N(omega)-L-arginino)succinate: N289, Y321, Q326, and K329.

It belongs to the lyase 1 family. Argininosuccinate lyase subfamily. In terms of assembly, homotetramer.

The catalysed reaction is 2-(N(omega)-L-arginino)succinate = fumarate + L-arginine. Its pathway is amino-acid biosynthesis; L-arginine biosynthesis; L-arginine from L-ornithine and carbamoyl phosphate: step 3/3. This chain is Probable argininosuccinate lyase (argx), found in Schizosaccharomyces pombe (strain 972 / ATCC 24843) (Fission yeast).